The chain runs to 478 residues: MESQQLSNYPHISHGSACASVTSKEVHTNQDPLDVSASKIQEYDKASTKANSQQTTTPASSAVPENLHHASPQPASVPPPQNGPYPQQCMMTQNQANPSGWSFYGHPSMIPYTPYQMSPMYFPPGPQSQFPQYPSSVGTPLSTPSPESGNTFTDSSSADSDMTSTKKYVRPPPMLTSPNDFPNWVKTYIKFLQNSNLGGIIPTVNGKPVPPMLTSPNDFPNWVKTYIKFLQNSNLGGIIPTVNGKPVRQITDDELTFLYNTFQIFAPSQFLPTWVKDILSVDYTDIMKILSKSIEKMQSDTQEANDIVTLANLQYNGSTPADAFETKVTNIIDRLNNNGIHINNKVACQLIMRGLSGEYKFLRYTRHRHLNMTVAELFLDIHAIYEEQQGSRNSKPNYRRNPSDEKNDSRSYTNTTKPKVIARNPQKTNNSKSKTARAHNVSTSNNSPSTDNDSISKSTTEPIQLNNKHDLHLRPETY.

Polar residues-rich tracts occupy residues 1–10, 48–60, and 127–152; these read MESQQLSNYP, TKANSQQTTTPAS, and QSQFPQYPSSVGTPLSTPSPESGNTF. Disordered stretches follow at residues 1–84, 126–174, and 390–478; these read MESQ…QNGP, PQSQ…PPPM, and GSRN…PETY. The segment covering 153-165 has biased composition (low complexity); the sequence is TDSSSADSDMTST. Residues 337 to 439 are RNA-binding; the sequence is NNGIHINNKV…NSKSKTARAH (103 aa). Positions 440–456 are enriched in low complexity; the sequence is NVSTSNNSPSTDNDSIS. A compositionally biased stretch (polar residues) spans 457-466; that stretch reads KSTTEPIQLN. Positions 467-478 are enriched in basic and acidic residues; that stretch reads NKHDLHLRPETY.

As to quaternary structure, homotrimer.

The protein resides in the cytoplasm. Functionally, capsid protein (CA) is the structural component of the virus-like particle (VLP), forming the shell that encapsulates the retrotransposons dimeric RNA genome. The particles are assembled from trimer-clustered units and there are holes in the capsid shells that allow for the diffusion of macromolecules. CA also has nucleocapsid-like chaperone activity, promoting primer tRNA(i)-Met annealing to the multipartite primer-binding site (PBS), dimerization of Ty1 RNA and initiation of reverse transcription. This chain is Transposon Ty1-H Gag polyprotein (TY1A-H), found in Saccharomyces cerevisiae (strain ATCC 204508 / S288c) (Baker's yeast).